We begin with the raw amino-acid sequence, 286 residues long: MINIEKANTLIEALPYIEKHQGKTIVVKYGGSAMKKDGLKESVMEDLVLMSYVGINIVLVHGGGAEINKMLAKVDIESKFVNGLRYTDEETMEIVKMVLAGKVNKDLVNKIHTKGGKAVGLCGIDNNMILCDPYKNYELGFVGEIKKVNVELIESCLKSGYISVIATIGVGDDGETYNINGDTAASAIAKELNADKLILLTDVPGLLREPDEEKSLITEVILEDVDKLFEEGIITGGMIPKIEGCVDALNNGVNRVHILDGRVPHSIITELFTDSGIGTLIRKENE.

Residues 63–64 (GG), Arg85, and Asn178 each bind substrate.

The protein belongs to the acetylglutamate kinase family. ArgB subfamily.

Its subcellular location is the cytoplasm. It carries out the reaction N-acetyl-L-glutamate + ATP = N-acetyl-L-glutamyl 5-phosphate + ADP. It participates in amino-acid biosynthesis; L-arginine biosynthesis; N(2)-acetyl-L-ornithine from L-glutamate: step 2/4. In terms of biological role, catalyzes the ATP-dependent phosphorylation of N-acetyl-L-glutamate. This chain is Acetylglutamate kinase, found in Clostridioides difficile (strain 630) (Peptoclostridium difficile).